A 304-amino-acid polypeptide reads, in one-letter code: tRNA dimethylallyltransferase (304 aa).

Position 2 to 9 (glycine 2 to threonine 9) interacts with ATP. Threonine 4 to threonine 9 is a substrate binding site. Interaction with substrate tRNA stretches follow at residues aspartate 27–leucine 30, glutamine 151–arginine 155, arginine 232–arginine 237, and lysine 265–arginine 272.

The protein belongs to the IPP transferase family. In terms of assembly, monomer. Requires Mg(2+) as cofactor.

The enzyme catalyses adenosine(37) in tRNA + dimethylallyl diphosphate = N(6)-dimethylallyladenosine(37) in tRNA + diphosphate. In terms of biological role, catalyzes the transfer of a dimethylallyl group onto the adenine at position 37 in tRNAs that read codons beginning with uridine, leading to the formation of N6-(dimethylallyl)adenosine (i(6)A). In Actinobacillus pleuropneumoniae serotype 7 (strain AP76), this protein is tRNA dimethylallyltransferase.